Consider the following 267-residue polypeptide: 2-keto-3-deoxy-L-rhamnonate aldolase (267 aa).

The active-site Proton acceptor is the H49. Q151 is a binding site for substrate. Residue E153 participates in Mg(2+) binding. 2 residues coordinate substrate: A178 and D179. D179 contacts Mg(2+).

Belongs to the HpcH/HpaI aldolase family. KDR aldolase subfamily. As to quaternary structure, homohexamer. Mg(2+) serves as cofactor.

It catalyses the reaction 2-dehydro-3-deoxy-L-rhamnonate = (S)-lactaldehyde + pyruvate. In terms of biological role, catalyzes the reversible retro-aldol cleavage of 2-keto-3-deoxy-L-rhamnonate (KDR) to pyruvate and lactaldehyde. The sequence is that of 2-keto-3-deoxy-L-rhamnonate aldolase from Salmonella typhi.